We begin with the raw amino-acid sequence, 235 residues long: MWRGRAGALLRVWGFWPTGVPRRRPLSCDAASQAGSNYPRCWNCGGPWGPGREDRFFCPQCRALQAPDPTRDYFSLMDCNRSFRVDTAKLQHRYQQLQRLVHPDFFSQRSQTEKDFSEKHSTLVNDAYKTLLAPLSRGLYLLKLHGIEIPERTDYEMDRQFLIEIMEINEKLAEAESEAAMKEIESIVKAKQKEFTDNVSSAFEQDDFEEAKEILTKMRYFSNIEEKIKLKKIPL.

Positions 41, 44, 58, and 61 each coordinate a divalent metal cation. In terms of domain architecture, J spans Asp-72–Leu-144.

The protein belongs to the HscB family. In terms of assembly, interacts with ISCU and HSPA9 to form an iron-sulfur transfer complex. Interacts with SDHAF1 (via the first LYR motif); the interaction recruits the iron-sulfur transfer complex composed of HSC20, HSPA9 and ISCU and mediates the incorporation of iron-sulfur clusters into SDHB which also interacts with HSC20. Interacts with the cytoplasmic form of ISCU and with CIA complex member CIAO1 (via LYR motif). Homodimer. Interacts with ISCU (cytoplasmic form); this interaction stabilizes the (Fe-S) clusters on ISCU. Interacts with the CIA complex member CIAO1 (via LYR motif). As to expression, expressed in lung, brain, stomach, spleen, ovary, testis, liver, muscle and heart.

The protein localises to the cytoplasm. Its subcellular location is the mitochondrion. It functions in the pathway cofactor biosynthesis; iron-sulfur cluster biosynthesis. Functionally, acts as a co-chaperone in iron-sulfur cluster assembly in mitochondria. Required for incorporation of iron-sulfur clusters into SDHB, the iron-sulfur protein subunit of succinate dehydrogenase that is involved in complex II of the mitochondrial electron transport chain. Recruited to SDHB by interaction with SDHAF1 which first binds SDHB and then recruits the iron-sulfur transfer complex formed by HSC20, HSPA9 and ISCU through direct binding to HSC20. Plays an essential role in hematopoiesis. Acts as a co-chaperone in iron-sulfur cluster assembly in the cytoplasm. Also mediates complex formation between components of the cytosolic iron-sulfur biogenesis pathway and the CIA targeting complex composed of CIAO1, DIPK1B/FAM69B and MMS19 by binding directly to the scaffold protein ISCU and to CIAO1. This facilitates iron-sulfur cluster insertion into a number of cytoplasmic and nuclear proteins including POLD1, ELP3, DPYD and PPAT. In Homo sapiens (Human), this protein is Iron-sulfur cluster co-chaperone protein HscB.